A 96-amino-acid polypeptide reads, in one-letter code: Putative septation protein SpoVG (96 aa).

Belongs to the SpoVG family.

Could be involved in septation. This is Putative septation protein SpoVG from Geobacillus sp. (strain WCH70).